We begin with the raw amino-acid sequence, 189 residues long: Apolipoprotein D (189 aa).

An N-terminal signal peptide occupies residues 1–20 (MVMLLLLLSALAGLFGAAEG). Gln-21 carries the post-translational modification Pyrrolidone carboxylic acid. 2 disulfides stabilise this stretch: Cys-28-Cys-134 and Cys-61-Cys-185. Asn-65 and Asn-98 each carry an N-linked (GlcNAc...) asparagine glycan.

It belongs to the calycin superfamily. Lipocalin family. In terms of assembly, homodimer.

Its subcellular location is the secreted. In terms of biological role, APOD occurs in the macromolecular complex with lecithin-cholesterol acyltransferase. It is probably involved in the transport and binding of bilin. Appears to be able to transport a variety of ligands in a number of different contexts. The protein is Apolipoprotein D (APOD) of Macaca fascicularis (Crab-eating macaque).